The chain runs to 101 residues: Large ribosomal subunit protein eL43 (101 aa).

Residues C40, C43, C59, and C62 each coordinate Zn(2+). The C4-type zinc-finger motif lies at 40–62; sequence CPSCRSLVRLERIAFGIWRCPKC.

This sequence belongs to the eukaryotic ribosomal protein eL43 family. Putative zinc-binding subfamily. In terms of assembly, part of the 50S ribosomal subunit. Requires Zn(2+) as cofactor.

In terms of biological role, binds to the 23S rRNA. This Pyrobaculum aerophilum (strain ATCC 51768 / DSM 7523 / JCM 9630 / CIP 104966 / NBRC 100827 / IM2) protein is Large ribosomal subunit protein eL43.